A 411-amino-acid polypeptide reads, in one-letter code: Protrudin (411 aa).

Residues 1–27 (MQTSEREGSGPELSPSVMPEAPLESPP) form a disordered region. Residues 1-66 (MQTSEREGSG…AGDGVRYLLR (66 aa)) lie on the Cytoplasmic side of the membrane. A sufficient for homooligomerization region spans residues 1–92 (MQTSEREGSG…LFLTLNEGAW (92 aa)). Residues 1–205 (MQTSEREGSG…LYLLPLCWVL (205 aa)) form a sufficient for localization to endoplasmic reticulum tubular network and for interactions with REEP1, REEP5, ATL1, ATL2, ATL3 and SPAST region. The segment at 51-64 (LEPLKDAGDGVRYL) is necessary for interaction with RAB11A and function in neurite outgrowth. The chain crosses the membrane as a helical span at residues 67–87 (WQMPLCSLLTCLGLNVLFLTL). Residue Asn88 is a topological domain, lumenal. The chain crosses the membrane as a helical span at residues 89 to 109 (EGAWYSVGALMISVPALLGYL). Over 110-187 (QEVCRARLPE…NPVVSSQFYG (78 aa)) the chain is Cytoplasmic. Positions 188–208 (ALLGTICMLYLLPLCWVLTLL) form an intramembrane region, helical. Residues 209 to 411 (NSTLFLGNVE…CASCNQTLSK (203 aa)) lie on the Cytoplasmic side of the membrane. The disordered stretch occupies residues 234-286 (MNPKQEEHAFESPPPPDVGGKGGLMDSTPALTPTEDLTPGSVEEAEEAEPDEE). The tract at residues 271–361 (TPGSVEEAEE…GCSATFSVLK (91 aa)) is necessary for interaction with KIF5A. Positions 276-286 (EEAEEAEPDEE) are enriched in acidic residues. The interval 286-292 (EFKDAIE) is necessary for interaction with VAPA. The FYVE-type zinc-finger motif lies at 344–410 (TNNFGNCTGC…VCASCNQTLS (67 aa)). 8 residues coordinate Zn(2+): Cys350, Cys353, Cys366, Cys369, Cys374, Cys377, Cys402, and Cys405.

As to quaternary structure, can form homooligomers (monomers, dimers and tetramers). Interacts with RAB11A (GDP-bound form); regulates RAB11A. Interacts with FKBP8; may negatively regulate ZFYVE27 phosphorylation. Interacts with VAPA (via MSP domain); may regulate ZFYVE27 retention in the endoplasmic reticulum and its function in cell projections formation. Interacts with VAPB (via MSP domain). Interacts with RAB11B (GDP-bound form), REEP1, REEP5, ATL1, ATL2, ATL3, SPAST, SURF4, KIF5A, KIF5B, KIF5C and RTN3. Post-translationally, phosphorylated. Phosphorylation is induced by NGF through the MAPK/ERK pathway and modulates interaction with RAB11A.

The protein localises to the recycling endosome membrane. It localises to the endoplasmic reticulum membrane. The protein resides in the cell projection. Its subcellular location is the growth cone membrane. Functionally, key regulator of RAB11-dependent vesicular trafficking during neurite extension through polarized membrane transport. Promotes axonal elongation and contributes to the establishment of neuronal cell polarity. Involved in nerve growth factor-induced neurite formation in VAPA-dependent manner. Contributes to both the formation and stabilization of the tubular ER network. Involved in ER morphogenesis by regulating the sheet-to-tubule balance and possibly the density of tubule interconnections. Acts as an adapter protein that facilitates the interaction of KIF5A with VAPA, VAPB, SURF4, RAB11A, RAB11B and RTN3 and the ZFYVE27-KIF5A complex contributes to the transport of these proteins in neurons. Can induce formation of neurite-like membrane protrusions in non-neuronal cells in a KIF5A/B-dependent manner. The protein is Protrudin (ZFYVE27) of Pongo abelii (Sumatran orangutan).